We begin with the raw amino-acid sequence, 350 residues long: D-guloside 3-dehydrogenase (350 aa).

Belongs to the zinc-containing alcohol dehydrogenase family. Zn(2+) is required as a cofactor.

It carries out the reaction a D-guloside + NAD(+) = a 3-dehydro-D-guloside + NADH + H(+). In terms of biological role, catalyzes the NAD(+)-dependent oxidation of the hydroxyl group at C3 of D-gulosides leading to 3-dehydro-D-gulosides. Probably functions in a metabolic pathway that transforms D-gulosides to D-glucosides. Is also able to catalyze the reverse reactions, i.e. the NADH-dependent reduction of the oxo group at C3 of 3-dehydro-D-gulosides leading to D-gulosides. In vitro, can oxidize D-gulose and methyl beta-D-guloside, and reduce methyl alpha-3-dehydro-D-guloside and methyl beta-3-dehydro-D-guloside. However, the actual specific physiological substrates for this metabolic pathway are unknown. The polypeptide is D-guloside 3-dehydrogenase (ycjQ) (Shigella flexneri).